The sequence spans 645 residues: Cysteine-rich receptor-like protein kinase 19 (645 aa).

The first 20 residues, Met1–Ala20, serve as a signal peptide directing secretion. Residues Gln21 to Ser262 are Extracellular-facing. Gnk2-homologous domains follow at residues Phe24–Ile129 and Thr135–Phe239. N-linked (GlcNAc...) asparagine glycosylation is found at Asn29, Asn39, Asn57, Asn101, Asn185, Asn241, and Asn260. The chain crosses the membrane as a helical span at residues Val263 to Phe283. Residues Ser284 to Arg645 lie on the Cytoplasmic side of the membrane. Residues Phe326–Ile603 enclose the Protein kinase domain. Residues Leu332 to Val340 and Lys354 each bind ATP. Tyr399 carries the post-translational modification Phosphotyrosine. Asp451 acts as the Proton acceptor in catalysis. At Thr491 the chain carries Phosphothreonine. Tyr499 is modified (phosphotyrosine). A disordered region spans residues Arg616–Arg645. Residues Glu620–Cys632 are compositionally biased toward polar residues.

Belongs to the protein kinase superfamily. Ser/Thr protein kinase family. CRK subfamily. In terms of assembly, interacts with MWL1.

It localises to the membrane. The catalysed reaction is L-seryl-[protein] + ATP = O-phospho-L-seryl-[protein] + ADP + H(+). It catalyses the reaction L-threonyl-[protein] + ATP = O-phospho-L-threonyl-[protein] + ADP + H(+). In Arabidopsis thaliana (Mouse-ear cress), this protein is Cysteine-rich receptor-like protein kinase 19 (CRK19).